Here is a 600-residue protein sequence, read N- to C-terminus: Mediator of RNA polymerase II transcription subunit 26 (600 aa).

Positions 10–87 (QIRDRLLQAI…RSWQKLIEPA (78 aa)) constitute a TFIIS N-terminal domain. 3 disordered regions span residues 99-330 (GATG…RRLE), 348-402 (HQRL…PRDY), and 431-461 (TRQIKPLTQKEPVRADSPVHMEQQSRTELDK). Residues 123-133 (SIHDLKSRNDL) show a composition bias toward basic and acidic residues. Positions 175–197 (PNSSPLPTNGISGSPESFASSLD) are enriched in polar residues. Residues 207–218 (SRLERDENDKHS) are compositionally biased toward basic and acidic residues. Over residues 314–324 (SPLPLAQPSTP) the composition is skewed to pro residues. The span at 441 to 461 (EPVRADSPVHMEQQSRTELDK) shows a compositional bias: basic and acidic residues. Phosphoserine is present on residues serine 447, serine 470, and serine 535.

It belongs to the Mediator complex subunit 26 family. Component of the Mediator complex, which is composed of MED1, MED4, MED6, MED7, MED8, MED9, MED10, MED11, MED12, MED13, MED13L, MED14, MED15, MED16, MED17, MED18, MED19, MED20, MED21, MED22, MED23, MED24, MED25, MED26, MED27, MED29, MED30, MED31, CCNC, CDK8 and CDC2L6/CDK11. The MED12, MED13, CCNC and CDK8 subunits form a distinct module termed the CDK8 module. Mediator containing the CDK8 module is less active than Mediator lacking this module in supporting transcriptional activation. Individual preparations of the Mediator complex lacking one or more distinct subunits have been variously termed ARC, CRSP, DRIP, PC2, SMCC and TRAP. Interacts with CEBPB (when not methylated).

It is found in the nucleus. Its function is as follows. Component of the Mediator complex, a coactivator involved in the regulated transcription of nearly all RNA polymerase II-dependent genes. Mediator functions as a bridge to convey information from gene-specific regulatory proteins to the basal RNA polymerase II transcription machinery. Mediator is recruited to promoters by direct interactions with regulatory proteins and serves as a scaffold for the assembly of a functional pre-initiation complex with RNA polymerase II and the general transcription factors. The polypeptide is Mediator of RNA polymerase II transcription subunit 26 (MED26) (Homo sapiens (Human)).